Here is a 1259-residue protein sequence, read N- to C-terminus: Clustered mitochondria protein homolog (1259 aa).

The span at 1-27 (MSQTNGNMEHSKETPQSQEVEQLTNGN) shows a compositional bias: polar residues. Residues 1-38 (MSQTNGNMEHSKETPQSQEVEQLTNGNHPEEQQEEEEN) form a disordered region. Positions 324–568 (DITRSQESYL…RVTPLDVMWQ (245 aa)) constitute a Clu domain. 2 stretches are compositionally biased toward basic and acidic residues: residues 612 to 628 (AEAE…SKEQ) and 634 to 647 (TEEK…QERV). Disordered regions lie at residues 612 to 647 (AEAE…QERV) and 881 to 908 (VVNG…PSRA). TPR repeat units follow at residues 982–1015 (AKLY…TERT), 1024–1057 (ILAY…WKII), and 1066–1099 (ITTM…CESL). Disordered stretches follow at residues 1192 to 1215 (TKVQ…ANAS) and 1229 to 1259 (EGGD…KSSA).

The protein belongs to the CLU family. May associate with the eukaryotic translation initiation factor 3 (eIF-3) complex.

The protein localises to the cytoplasm. In terms of biological role, mRNA-binding protein involved in proper cytoplasmic distribution of mitochondria. This is Clustered mitochondria protein homolog from Aspergillus clavatus (strain ATCC 1007 / CBS 513.65 / DSM 816 / NCTC 3887 / NRRL 1 / QM 1276 / 107).